A 423-amino-acid chain; its full sequence is Aspartate aminotransferase, mitochondrial (423 aa).

The N-terminal 22 residues, 1-22, are a transit peptide targeting the mitochondrion; sequence MALLQSRLLLSAPRRAAATARA. 3 residues coordinate substrate: glycine 58, tryptophan 155, and asparagine 208. Lysine 272 carries the N6-(pyridoxal phosphate)lysine modification. Position 400 (arginine 400) interacts with substrate.

The protein belongs to the class-I pyridoxal-phosphate-dependent aminotransferase family. Homodimer. Requires pyridoxal 5'-phosphate as cofactor. Detected in heart (at protein level).

It localises to the mitochondrion matrix. It carries out the reaction L-aspartate + 2-oxoglutarate = oxaloacetate + L-glutamate. The enzyme catalyses L-kynurenine + 2-oxoglutarate = kynurenate + L-glutamate + H2O. Its function is as follows. Catalyzes the irreversible transamination of the L-tryptophan metabolite L-kynurenine to form kynurenic acid (KA). As a member of the malate-aspartate shuttle, it has a key role in the intracellular NAD(H) redox balance. Is important for metabolite exchange between mitochondria and cytosol, and for amino acid metabolism. The polypeptide is Aspartate aminotransferase, mitochondrial (GOT2) (Gallus gallus (Chicken)).